Here is a 228-residue protein sequence, read N- to C-terminus: Phosphoglycolate phosphatase (228 aa).

Asp12 serves as the catalytic Nucleophile. Mg(2+)-binding residues include Asp12, Asp14, and Asp177.

The protein belongs to the HAD-like hydrolase superfamily. CbbY/CbbZ/Gph/YieH family. It depends on Mg(2+) as a cofactor.

It catalyses the reaction 2-phosphoglycolate + H2O = glycolate + phosphate. It participates in organic acid metabolism; glycolate biosynthesis; glycolate from 2-phosphoglycolate: step 1/1. Specifically catalyzes the dephosphorylation of 2-phosphoglycolate. Is involved in the dissimilation of the intracellular 2-phosphoglycolate formed during the DNA repair of 3'-phosphoglycolate ends, a major class of DNA lesions induced by oxidative stress. The chain is Phosphoglycolate phosphatase from Vibrio parahaemolyticus serotype O3:K6 (strain RIMD 2210633).